Reading from the N-terminus, the 429-residue chain is Glutamate--tRNA ligase 1 (429 aa).

The 'HIGH' region signature appears at 6–16; it reads PSPTGDMHIGN. Residues 235 to 239 carry the 'KMSKS' region motif; it reads KMSKR. Lys-238 lines the ATP pocket.

It belongs to the class-I aminoacyl-tRNA synthetase family. Glutamate--tRNA ligase type 1 subfamily. Monomer.

The protein resides in the cytoplasm. It carries out the reaction tRNA(Glu) + L-glutamate + ATP = L-glutamyl-tRNA(Glu) + AMP + diphosphate. In terms of biological role, catalyzes the attachment of glutamate to tRNA(Glu) in a two-step reaction: glutamate is first activated by ATP to form Glu-AMP and then transferred to the acceptor end of tRNA(Glu). In Campylobacter fetus subsp. fetus (strain 82-40), this protein is Glutamate--tRNA ligase 1.